The chain runs to 407 residues: MSLKHHHRGLELSASKSFVSKKWTLFLCIGFFCAGILFSDRMWPEPESNVVSRDTVASDERLRLESEDCDSSKKGLKRESKDILGDVYKSPDAIQTLDKTISKLETELADARAAQESIMNGSPVSDDFKLPETVTKRKYLMVVGVNTAFSSRKRRDSVRATWMPPGEERKKLEEEKGIVMRFVIGHSSTPGGILDRAIQAEESKHGDFLRLDHVEGYLELSAKTKTYFTTAFAMWDADFYVKVDDDVHVNIATLGAELARYRMKPRVYIGCMKSGPVLAQKGVRYHEPEYWKFGEEGNKYFRHATGQLYAISRELASYISINQNVLHKYVNEDVSLGSWFLGLDVEHVDDRRLCCGTTDCEWKAQAGNICVASFDWSCSGICRSADRMKDVHRRCGEGEKALLAASF.

The chain crosses the membrane as a helical; Signal-anchor for type II membrane protein span at residues 23–39 (WTLFLCIGFFCAGILFS).

Belongs to the glycosyltransferase 31 family. The cofactor is Mn(2+).

The protein resides in the golgi apparatus membrane. The protein operates within protein modification; protein glycosylation. Beta-1,3-galactosyltransferase that transfers galactose from UDP-galactose to substrates with a terminal glycosyl residue. This Arabidopsis thaliana (Mouse-ear cress) protein is Probable beta-1,3-galactosyltransferase 4 (B3GALT4).